The sequence spans 157 residues: Probable succinate transporter subunit YjjB (157 aa).

Helical transmembrane passes span 15–35 (ILAA…VQAL), 50–70 (MILM…SMLV), 87–107 (VFTV…TAMI), and 121–141 (LMIT…ALSV).

The protein belongs to the ThrE exporter (TC 2.A.79) family. The transporter is composed of YjjB and YjjP.

The protein localises to the cell inner membrane. Its function is as follows. Involved in succinate export with YjjP. Both proteins are required for export. This chain is Probable succinate transporter subunit YjjB, found in Shigella dysenteriae serotype 1 (strain Sd197).